A 369-amino-acid chain; its full sequence is Choline-phosphate cytidylyltransferase B (369 aa).

A disordered region spans residues 1-27 (MPVLTTDAESETGIPKSLSNEPPSETM). CTP contacts are provided by isoleucine 84, phenylalanine 85, histidine 92, and lysine 122. Phosphocholine-binding residues include lysine 122 and tryptophan 151. Residues histidine 168, aspartate 169, tyrosine 173, glutamine 195, arginine 196, threonine 197, and isoleucine 200 each coordinate CTP. Positions 309 to 369 (RMLQALSPKQ…SMSEGDEDEK (61 aa)) are disordered. 7 positions are modified to phosphoserine: serine 315, serine 319, serine 322, serine 323, serine 329, serine 331, and serine 335. Positions 319–339 (SPVSSPTRSRSPSRSPSPTFS) are enriched in low complexity. Threonine 345 bears the Phosphothreonine mark. Phosphoserine occurs at positions 346, 349, 350, 355, 360, and 362. Over residues 351–362 (PKAASASISSMS) the composition is skewed to low complexity.

This sequence belongs to the cytidylyltransferase family. In terms of assembly, homodimer. As to expression, highly expressed in brain (at protein level). Expressed in liver (at protein level). Expressed at lower levels in lung and gonads. Expressed in brain (at protein level). Expressed at lower levels in lung and gonads.

The protein localises to the endoplasmic reticulum. Its subcellular location is the cytoplasm. It carries out the reaction phosphocholine + CTP + H(+) = CDP-choline + diphosphate. The protein operates within phospholipid metabolism; phosphatidylcholine biosynthesis; phosphatidylcholine from phosphocholine: step 1/2. Its function is as follows. Catalyzes the key rate-limiting step in the CDP-choline pathway for phosphatidylcholine biosynthesis. Plays an important role in ovary maturation and the maintenance of sperm production. Catalyzes the key rate-limiting step in the CDP-choline pathway for phosphatidylcholine biosynthesis. This is Choline-phosphate cytidylyltransferase B (Pcyt1b) from Mus musculus (Mouse).